We begin with the raw amino-acid sequence, 221 residues long: Thiopurine S-methyltransferase (221 aa).

Residues Trp12, Leu47, Glu68, and Arg125 each contribute to the S-adenosyl-L-methionine site.

It belongs to the class I-like SAM-binding methyltransferase superfamily. TPMT family.

It localises to the cytoplasm. The enzyme catalyses S-adenosyl-L-methionine + a thiopurine = S-adenosyl-L-homocysteine + a thiopurine S-methylether.. This is Thiopurine S-methyltransferase from Legionella pneumophila subsp. pneumophila (strain Philadelphia 1 / ATCC 33152 / DSM 7513).